Consider the following 233-residue polypeptide: Opacity protein opA67 (233 aa).

A signal peptide is located at residue Ala-1.

This sequence belongs to the opacity porin family.

The protein localises to the cell outer membrane. Functionally, implicated in a number of adherence functions. OPA proteins are implicated in pathogenesis and are subject to phase variation. This Neisseria gonorrhoeae protein is Opacity protein opA67.